A 247-amino-acid chain; its full sequence is Carboxy-S-adenosyl-L-methionine synthase (247 aa).

Residues Tyr-38, Gly-63–Ser-65, Asn-131, and Arg-198 contribute to the S-adenosyl-L-methionine site.

Belongs to the class I-like SAM-binding methyltransferase superfamily. Cx-SAM synthase family. Homodimer.

The catalysed reaction is prephenate + S-adenosyl-L-methionine = carboxy-S-adenosyl-L-methionine + 3-phenylpyruvate + H2O. Catalyzes the conversion of S-adenosyl-L-methionine (SAM) to carboxy-S-adenosyl-L-methionine (Cx-SAM). This is Carboxy-S-adenosyl-L-methionine synthase from Desulforapulum autotrophicum (strain ATCC 43914 / DSM 3382 / VKM B-1955 / HRM2) (Desulfobacterium autotrophicum).